The primary structure comprises 449 residues: C4-dicarboxylate transport protein (449 aa).

Transmembrane regions (helical) follow at residues 18 to 38 (PFYL…ALLG), 61 to 81 (MIIS…VAHV), 93 to 113 (VYFL…AHVV), 159 to 179 (FVGD…IALA), 202 to 222 (LVQM…AFTI), 244 to 264 (SLLF…FSIL), 346 to 366 (LFLV…AGFI), and 369 to 389 (AATL…ILGV).

The protein belongs to the dicarboxylate/amino acid:cation symporter (DAACS) (TC 2.A.23) family.

Its subcellular location is the cell inner membrane. Responsible for the transport of dicarboxylates such as succinate, fumarate, and malate from the periplasm across the membrane. This is C4-dicarboxylate transport protein from Xylella fastidiosa (strain M23).